A 488-amino-acid polypeptide reads, in one-letter code: uncharacterized protein (488 aa).

It belongs to the protein kinase superfamily. ADCK protein kinase family.

This is an uncharacterized protein from Mycobacterium tuberculosis (strain CDC 1551 / Oshkosh).